The chain runs to 491 residues: UDP-glycosyltransferase 73C1 (491 aa).

UDP-alpha-D-glucose contacts are provided by residues Ser-292, Ser-352–Gln-354, His-369–Glu-377, and Phe-391–Gln-394.

The protein belongs to the UDP-glycosyltransferase family.

In terms of biological role, involved in the O-glucosylation of trans-zeatin and dihydrozeatin. Also active in vitro on cis-zeatin, dihydrozeatin-9-N-Glc, and olomoucine. Can detoxify the explosive 2,4,6-trinitrotoluene in plant by forming O- or C-glucose conjugates. The protein is UDP-glycosyltransferase 73C1 (UGT73C1) of Arabidopsis thaliana (Mouse-ear cress).